A 96-amino-acid polypeptide reads, in one-letter code: Co-chaperonin GroES (96 aa).

It belongs to the GroES chaperonin family. Heptamer of 7 subunits arranged in a ring. Interacts with the chaperonin GroEL.

The protein localises to the cytoplasm. Together with the chaperonin GroEL, plays an essential role in assisting protein folding. The GroEL-GroES system forms a nano-cage that allows encapsulation of the non-native substrate proteins and provides a physical environment optimized to promote and accelerate protein folding. GroES binds to the apical surface of the GroEL ring, thereby capping the opening of the GroEL channel. The chain is Co-chaperonin GroES from Legionella jeonii.